A 308-amino-acid polypeptide reads, in one-letter code: Ornithine carbamoyltransferase (308 aa).

Residues 55 to 58, Gln-82, Arg-106, and 133 to 136 each bind carbamoyl phosphate; these read STRT and HPCQ. Residues Asn-164, Asp-227, and 231 to 232 contribute to the L-ornithine site; that span reads SM. Carbamoyl phosphate-binding positions include 267–268 and Arg-295; that span reads CL.

Belongs to the aspartate/ornithine carbamoyltransferase superfamily. OTCase family.

The protein resides in the cytoplasm. It carries out the reaction carbamoyl phosphate + L-ornithine = L-citrulline + phosphate + H(+). The protein operates within amino-acid biosynthesis; L-arginine biosynthesis; L-arginine from L-ornithine and carbamoyl phosphate: step 1/3. Reversibly catalyzes the transfer of the carbamoyl group from carbamoyl phosphate (CP) to the N(epsilon) atom of ornithine (ORN) to produce L-citrulline. The protein is Ornithine carbamoyltransferase of Prochlorococcus marinus subsp. pastoris (strain CCMP1986 / NIES-2087 / MED4).